The sequence spans 70 residues: Waprin-Thr1 (70 aa).

Positions 1–19 (MKARLLLLSVVILVGMVSA) are cleaved as a signal peptide. One can recognise a WAP domain in the interval 20-70 (ENEKAGSCPDVNQPIPPLGLCRNMCESDSGCPNNEKCCKNGCGFMTCSRPR). 4 cysteine pairs are disulfide-bonded: C27–C57, C40–C61, C44–C56, and C50–C66.

It belongs to the venom waprin family. As to expression, expressed by the venom gland.

The protein resides in the secreted. Its function is as follows. Damages membranes of susceptible bacteria. Has no hemolytic activity. Not toxic to mice. Does not inhibit the proteinases elastase and cathepsin G. The protein is Waprin-Thr1 of Thrasops jacksonii (Jackson's black tree snake).